The sequence spans 453 residues: MRYLPLTDTDRSEMLSVVGASSIDDLFVDVPKEARLDGPIRDLPMHASEMAVEKHMRARAAKNLVAGDVPFFLGAGAYRHHVPASVDHIIQRGEFLTAYTPYQPEIAQGTLQMLFEFQTQVAKLYGCEVANASMYDGSTACWEAISMASRVTKRNRAVLSGALHPHYSEVAKTMAKYLGLEIADAQPAIQAAPDNAGLTSRIDENTSCVVVQYPDILGRIADLTEIAEAAHAKGALLIVVNTEPVALGAIKSPGEMGADIVVGEGQSLGVGLQFGGPYLGLFAVRDKKHVRQMPGRLCGETVDAEGKRGFVLTLSTREQHIRREKATSNICTNSGLCALAFSVHMTLLGEVGLRRLAAENHRLACLTADRLAKVPGVTVLNDTFFNEFTIQVGQDAREIVRTLADKGVLAGVSLGRLYPDVERLSDALIVATTETTSEDDIEALGSALEEVLA.

Belongs to the GcvP family. N-terminal subunit subfamily. In terms of assembly, the glycine cleavage system is composed of four proteins: P, T, L and H. In this organism, the P 'protein' is a heterodimer of two subunits.

It carries out the reaction N(6)-[(R)-lipoyl]-L-lysyl-[glycine-cleavage complex H protein] + glycine + H(+) = N(6)-[(R)-S(8)-aminomethyldihydrolipoyl]-L-lysyl-[glycine-cleavage complex H protein] + CO2. Functionally, the glycine cleavage system catalyzes the degradation of glycine. The P protein binds the alpha-amino group of glycine through its pyridoxal phosphate cofactor; CO(2) is released and the remaining methylamine moiety is then transferred to the lipoamide cofactor of the H protein. The chain is Probable glycine dehydrogenase (decarboxylating) subunit 1 from Erythrobacter litoralis (strain HTCC2594).